The sequence spans 315 residues: uncharacterized protein (315 aa).

This is an uncharacterized protein from Bos taurus (Bovine).